The chain runs to 189 residues: GTPase NRas (189 aa).

Residues 10-18 (GAGGVGKSA) and 29-30 (VD) contribute to the GTP site. The Effector region motif lies at 32-40 (YDPTIEDSY). 57 to 61 (DTAGQ) is a GTP binding site. Ser-89 is modified (phosphoserine). Position 116-119 (116-119 (NKCD)) interacts with GTP. The segment at 166 to 185 (YRLKKLNSSDDGTQGCMGSP) is hypervariable region. Residue Lys-170 forms a Glycyl lysine isopeptide (Lys-Gly) (interchain with G-Cter in ubiquitin) linkage. Cys-181 carries S-palmitoyl cysteine lipidation. Cys-186 carries S-farnesyl cysteine lipidation. Positions 187–189 (VLM) are cleaved as a propeptide — removed in mature form.

This sequence belongs to the small GTPase superfamily. Ras family. Interacts (active GTP-bound form preferentially) with RGS14. Interacts (active GTP-bound form) with RASSF7. Interacts (active GTP-bound form) with both SHOC2 and PP1c (all isoforms) to form a tertiary complex; SHOC2 and PP1c preferably bind M-Ras/MRAS, but they also bind K-Ras/KRAS, N-Ras/NRAS and H-Ras/HRAS. Palmitoylated by the ZDHHC9-GOLGA7 complex. Depalmitoylated by ABHD17A, ABHD17B and ABHD17C. A continuous cycle of de- and re-palmitoylation regulates rapid exchange between plasma membrane and Golgi. In terms of processing, acetylation at Lys-104 prevents interaction with guanine nucleotide exchange factors (GEFs). Post-translationally, ubiquitinated by the BCR(LZTR1) E3 ubiquitin ligase complex at Lys-170 in a non-degradative manner, leading to inhibit Ras signaling by decreasing Ras association with membranes. Phosphorylation at Ser-89 enhances NRAS association with its downstream effectors.

Its subcellular location is the cell membrane. It is found in the golgi apparatus membrane. The enzyme catalyses GTP + H2O = GDP + phosphate + H(+). Its activity is regulated as follows. Alternates between an inactive form bound to GDP and an active form bound to GTP. Activated by a guanine nucleotide-exchange factor (GEF) and inactivated by a GTPase-activating protein (GAP). Ras proteins bind GDP/GTP and possess intrinsic GTPase activity. This is GTPase NRas (Nras) from Mus musculus (Mouse).